The primary structure comprises 292 residues: Enoyl-CoA hydratase domain-containing protein 2, mitochondrial (292 aa).

Residues 1–35 constitute a mitochondrion transit peptide; sequence MLRVLCLLRPWRPLRARGCASDGAAGGSEIQVRAL. Lys97 carries the post-translational modification N6-acetyllysine; alternate. Lys97 carries the N6-succinyllysine; alternate modification.

It belongs to the enoyl-CoA hydratase/isomerase family.

It is found in the mitochondrion. This is Enoyl-CoA hydratase domain-containing protein 2, mitochondrial (ECHDC2) from Homo sapiens (Human).